Consider the following 662-residue polypeptide: UvrABC system protein B (662 aa).

The region spanning 25–414 (AGLNSKKRSQ…GTVVELIIRP (390 aa)) is the Helicase ATP-binding domain. 38-45 (GITGSGKT) contacts ATP. Positions 91-114 (YYDYYQPEAYIVRTDTFIEKDSSI) match the Beta-hairpin motif. In terms of domain architecture, Helicase C-terminal spans 430-592 (QVEDLISEIQ…IIPKTINSAI (163 aa)). The UVR domain occupies 622–657 (KSYMDKLKKEMFKAASNLEFEQAAKLRNQLKTLEKA).

Belongs to the UvrB family. In terms of assembly, forms a heterotetramer with UvrA during the search for lesions. Interacts with UvrC in an incision complex.

Its subcellular location is the cytoplasm. Functionally, the UvrABC repair system catalyzes the recognition and processing of DNA lesions. A damage recognition complex composed of 2 UvrA and 2 UvrB subunits scans DNA for abnormalities. Upon binding of the UvrA(2)B(2) complex to a putative damaged site, the DNA wraps around one UvrB monomer. DNA wrap is dependent on ATP binding by UvrB and probably causes local melting of the DNA helix, facilitating insertion of UvrB beta-hairpin between the DNA strands. Then UvrB probes one DNA strand for the presence of a lesion. If a lesion is found the UvrA subunits dissociate and the UvrB-DNA preincision complex is formed. This complex is subsequently bound by UvrC and the second UvrB is released. If no lesion is found, the DNA wraps around the other UvrB subunit that will check the other stand for damage. The protein is UvrABC system protein B of Rickettsia typhi (strain ATCC VR-144 / Wilmington).